The sequence spans 378 residues: Packaging protein 3 (378 aa).

Disordered stretches follow at residues 1-73 and 355-378; these read MHPV…EGPV and SRPPQGESFADEGPSESDDEDDFI. The interval 1-178 is interaction with packaging protein 1; the sequence is MHPVLQSVRN…AFGEELRNTC (178 aa). Composition is skewed to low complexity over residues 16 to 35 and 49 to 58; these read GGPHQQQPQQQQHGVSSVRR and PGAGATPTAG. Ser-362 bears the Phosphoserine; by host mark. The span at 363-378 shows a compositional bias: acidic residues; that stretch reads FADEGPSESDDEDDFI.

The protein belongs to the adenoviridae packaging protein 3 family. In terms of assembly, part of the genome packaging complex composed of packaging proteins 1, 2 and 3; this complex specifically binds to the packaging sequence on the left end of viral genomic DNA and performs packaging of the viral genome. Interacts with hexon-linking protein IIIa; this interaction is required to promote correct genome packaging. In terms of processing, cleaved at different sites by the viral protease during virion maturation.

It localises to the host nucleus. In terms of biological role, involved in viral genome packaging through its interaction with packaging proteins 1 and 2. After proteolytic cleavage by adenovirus protease, L1 52/55k protein is removed from the capsid during viral maturation. This is Packaging protein 3 from Galliformes (FAdV-1).